Consider the following 184-residue polypeptide: Ribosome maturation factor RimP (184 aa).

Belongs to the RimP family.

It localises to the cytoplasm. Required for maturation of 30S ribosomal subunits. The sequence is that of Ribosome maturation factor RimP from Zymomonas mobilis subsp. mobilis (strain ATCC 31821 / ZM4 / CP4).